Consider the following 136-residue polypeptide: Protein NrdI (136 aa).

The protein belongs to the NrdI family.

Probably involved in ribonucleotide reductase function. This chain is Protein NrdI, found in Citrobacter koseri (strain ATCC BAA-895 / CDC 4225-83 / SGSC4696).